We begin with the raw amino-acid sequence, 105 residues long: Met repressor (105 aa).

The protein belongs to the MetJ family. Homodimer.

It is found in the cytoplasm. This regulatory protein, when combined with SAM (S-adenosylmethionine) represses the expression of the methionine regulon and of enzymes involved in SAM synthesis. This is Met repressor from Actinobacillus succinogenes (strain ATCC 55618 / DSM 22257 / CCUG 43843 / 130Z).